Reading from the N-terminus, the 230-residue chain is 5'-methylthioadenosine/S-adenosylhomocysteine nucleosidase (230 aa).

Residue glutamate 12 is the Proton acceptor of the active site. Residues glycine 78, methionine 153, and 174–175 (ME) contribute to the substrate site. Residue aspartate 198 is the Proton donor of the active site.

The protein belongs to the PNP/UDP phosphorylase family. MtnN subfamily.

The catalysed reaction is S-adenosyl-L-homocysteine + H2O = S-(5-deoxy-D-ribos-5-yl)-L-homocysteine + adenine. It catalyses the reaction S-methyl-5'-thioadenosine + H2O = 5-(methylsulfanyl)-D-ribose + adenine. The enzyme catalyses 5'-deoxyadenosine + H2O = 5-deoxy-D-ribose + adenine. It functions in the pathway amino-acid biosynthesis; L-methionine biosynthesis via salvage pathway; S-methyl-5-thio-alpha-D-ribose 1-phosphate from S-methyl-5'-thioadenosine (hydrolase route): step 1/2. In terms of biological role, catalyzes the irreversible cleavage of the glycosidic bond in both 5'-methylthioadenosine (MTA) and S-adenosylhomocysteine (SAH/AdoHcy) to adenine and the corresponding thioribose, 5'-methylthioribose and S-ribosylhomocysteine, respectively. Also cleaves 5'-deoxyadenosine, a toxic by-product of radical S-adenosylmethionine (SAM) enzymes, into 5-deoxyribose and adenine. The polypeptide is 5'-methylthioadenosine/S-adenosylhomocysteine nucleosidase (Aeromonas salmonicida (strain A449)).